Here is a 156-residue protein sequence, read N- to C-terminus: Endoribonuclease YbeY (156 aa).

Residues histidine 122, histidine 126, and histidine 132 each coordinate Zn(2+).

Belongs to the endoribonuclease YbeY family. It depends on Zn(2+) as a cofactor.

It is found in the cytoplasm. Single strand-specific metallo-endoribonuclease involved in late-stage 70S ribosome quality control and in maturation of the 3' terminus of the 16S rRNA. In Geobacillus kaustophilus (strain HTA426), this protein is Endoribonuclease YbeY.